A 1171-amino-acid polypeptide reads, in one-letter code: Phytochrome B (1171 aa).

The segment covering 1–19 has biased composition (low complexity); sequence MASGSRATPTRSPSSARPA. The segment at 1–53 is disordered; it reads MASGSRATPTRSPSSARPAAPRHQHHHSQSSGGSTSRAGGGGGGGGGGGGGAA. Over residues 38-52 the composition is skewed to gly residues; the sequence is AGGGGGGGGGGGGGA. Residues 259–442 form the GAF domain; sequence DVKLLCDTVV…AFGLQLNMEL (184 aa). Position 364 (Cys364) interacts with phytochromobilin. PAS domains follow at residues 661–732 and 795–866; these read VARE…LRGD and DYKA…MIVL. The region spanning 943 to 1161 is the Histidine kinase domain; it reads YIYQEIKNPL…FFHIVLELPQ (219 aa).

Belongs to the phytochrome family. Homodimer. Contains one covalently linked phytochromobilin chromophore.

Its function is as follows. Regulatory photoreceptor which exists in two forms that are reversibly interconvertible by light: the Pr form that absorbs maximally in the red region of the spectrum and the Pfr form that absorbs maximally in the far-red region. Photoconversion of Pr to Pfr induces an array of morphogenic responses, whereas reconversion of Pfr to Pr cancels the induction of those responses. Pfr controls the expression of a number of nuclear genes including those encoding the small subunit of ribulose-bisphosphate carboxylase, chlorophyll A/B binding protein, protochlorophyllide reductase, rRNA, etc. It also controls the expression of its own gene(s) in a negative feedback fashion. This Oryza sativa subsp. indica (Rice) protein is Phytochrome B (PHYB).